The sequence spans 301 residues: Glycerol-3-phosphate dehydrogenase [NAD(P)+] (301 aa).

NADPH-binding residues include Trp-13, Arg-33, and Lys-78. The sn-glycerol 3-phosphate site is built by Lys-78 and Gly-106. Position 110 (Ala-110) interacts with NADPH. Sn-glycerol 3-phosphate contacts are provided by Lys-161, Asp-214, Ser-224, Arg-225, and Asn-226. Lys-161 functions as the Proton acceptor in the catalytic mechanism. Residue Arg-225 coordinates NADPH. Glu-251 is an NADPH binding site.

Belongs to the NAD-dependent glycerol-3-phosphate dehydrogenase family.

It localises to the cytoplasm. It carries out the reaction sn-glycerol 3-phosphate + NAD(+) = dihydroxyacetone phosphate + NADH + H(+). The catalysed reaction is sn-glycerol 3-phosphate + NADP(+) = dihydroxyacetone phosphate + NADPH + H(+). The protein operates within membrane lipid metabolism; glycerophospholipid metabolism. Functionally, catalyzes the reduction of the glycolytic intermediate dihydroxyacetone phosphate (DHAP) to sn-glycerol 3-phosphate (G3P), the key precursor for phospholipid synthesis. The polypeptide is Glycerol-3-phosphate dehydrogenase [NAD(P)+] (Synechococcus sp. (strain RCC307)).